The sequence spans 200 residues: FMN-dependent NADH:quinone oxidoreductase 2 (200 aa).

135–138 contacts FMN; sequence SRGG.

This sequence belongs to the azoreductase type 1 family. As to quaternary structure, homodimer. FMN is required as a cofactor.

The enzyme catalyses 2 a quinone + NADH + H(+) = 2 a 1,4-benzosemiquinone + NAD(+). It catalyses the reaction N,N-dimethyl-1,4-phenylenediamine + anthranilate + 2 NAD(+) = 2-(4-dimethylaminophenyl)diazenylbenzoate + 2 NADH + 2 H(+). In terms of biological role, quinone reductase that provides resistance to thiol-specific stress caused by electrophilic quinones. Its function is as follows. Also exhibits azoreductase activity. Catalyzes the reductive cleavage of the azo bond in aromatic azo compounds to the corresponding amines. The chain is FMN-dependent NADH:quinone oxidoreductase 2 from Clostridium acetobutylicum (strain ATCC 824 / DSM 792 / JCM 1419 / IAM 19013 / LMG 5710 / NBRC 13948 / NRRL B-527 / VKM B-1787 / 2291 / W).